The sequence spans 486 residues: N-succinylglutamate 5-semialdehyde dehydrogenase (486 aa).

Position 220-225 (220-225) interacts with NAD(+); the sequence is GSSRTG. Catalysis depends on residues E243 and C277.

The protein belongs to the aldehyde dehydrogenase family. AstD subfamily.

It carries out the reaction N-succinyl-L-glutamate 5-semialdehyde + NAD(+) + H2O = N-succinyl-L-glutamate + NADH + 2 H(+). Its pathway is amino-acid degradation; L-arginine degradation via AST pathway; L-glutamate and succinate from L-arginine: step 4/5. Its function is as follows. Catalyzes the NAD-dependent reduction of succinylglutamate semialdehyde into succinylglutamate. This chain is N-succinylglutamate 5-semialdehyde dehydrogenase, found in Shewanella sediminis (strain HAW-EB3).